The following is a 256-amino-acid chain: Large ribosomal subunit protein eL8B (256 aa).

The tract at residues 1-37 (MAPGKKVAPAPFGAKSTKSNKAKNPLTHSTPKNFGIG) is disordered.

Belongs to the eukaryotic ribosomal protein eL8 family. In terms of assembly, component of the large ribosomal subunit (LSU). Mature yeast ribosomes consist of a small (40S) and a large (60S) subunit. The 40S small subunit contains 1 molecule of ribosomal RNA (18S rRNA) and 33 different proteins (encoded by 57 genes). The large 60S subunit contains 3 rRNA molecules (25S, 5.8S and 5S rRNA) and 46 different proteins (encoded by 81 genes).

It localises to the cytoplasm. In terms of biological role, component of the ribosome, a large ribonucleoprotein complex responsible for the synthesis of proteins in the cell. The small ribosomal subunit (SSU) binds messenger RNAs (mRNAs) and translates the encoded message by selecting cognate aminoacyl-transfer RNA (tRNA) molecules. The large subunit (LSU) contains the ribosomal catalytic site termed the peptidyl transferase center (PTC), which catalyzes the formation of peptide bonds, thereby polymerizing the amino acids delivered by tRNAs into a polypeptide chain. The nascent polypeptides leave the ribosome through a tunnel in the LSU and interact with protein factors that function in enzymatic processing, targeting, and the membrane insertion of nascent chains at the exit of the ribosomal tunnel. In Saccharomyces cerevisiae (strain ATCC 204508 / S288c) (Baker's yeast), this protein is Large ribosomal subunit protein eL8B.